Reading from the N-terminus, the 299-residue chain is Oxygen-dependent coproporphyrinogen-III oxidase (299 aa).

Ser92 is a binding site for substrate. Residues His96 and His106 each contribute to the Mn(2+) site. Catalysis depends on His106, which acts as the Proton donor. 108-110 (NVR) is a substrate binding site. 2 residues coordinate Mn(2+): His145 and His175. Positions 240-275 (YVEFNLVWDRGTLFGLQTGGRTESILMSMPPLVRWE) are important for dimerization. Position 258-260 (258-260 (GGR)) interacts with substrate.

It belongs to the aerobic coproporphyrinogen-III oxidase family. Homodimer. The cofactor is Mn(2+).

It localises to the cytoplasm. The catalysed reaction is coproporphyrinogen III + O2 + 2 H(+) = protoporphyrinogen IX + 2 CO2 + 2 H2O. It participates in porphyrin-containing compound metabolism; protoporphyrin-IX biosynthesis; protoporphyrinogen-IX from coproporphyrinogen-III (O2 route): step 1/1. Its function is as follows. Involved in the heme biosynthesis. Catalyzes the aerobic oxidative decarboxylation of propionate groups of rings A and B of coproporphyrinogen-III to yield the vinyl groups in protoporphyrinogen-IX. In Escherichia coli (strain SMS-3-5 / SECEC), this protein is Oxygen-dependent coproporphyrinogen-III oxidase.